Reading from the N-terminus, the 274-residue chain is Hydroxyethylthiazole kinase (274 aa).

M49 contributes to the substrate binding site. 2 residues coordinate ATP: R125 and T173. G200 lines the substrate pocket.

The protein belongs to the Thz kinase family. Mg(2+) is required as a cofactor.

It catalyses the reaction 5-(2-hydroxyethyl)-4-methylthiazole + ATP = 4-methyl-5-(2-phosphooxyethyl)-thiazole + ADP + H(+). Its pathway is cofactor biosynthesis; thiamine diphosphate biosynthesis; 4-methyl-5-(2-phosphoethyl)-thiazole from 5-(2-hydroxyethyl)-4-methylthiazole: step 1/1. Its function is as follows. Catalyzes the phosphorylation of the hydroxyl group of 4-methyl-5-beta-hydroxyethylthiazole (THZ). The chain is Hydroxyethylthiazole kinase from Desulfosudis oleivorans (strain DSM 6200 / JCM 39069 / Hxd3) (Desulfococcus oleovorans).